Here is a 655-residue protein sequence, read N- to C-terminus: p-hydroxybenzoic acid efflux pump subunit AaeB (655 aa).

The next 11 membrane-spanning stretches (helical) occupy residues phenylalanine 13–leucine 33, tryptophan 38–proline 58, leucine 69–isoleucine 89, leucine 93–valine 113, tryptophan 121–leucine 141, glutamate 152–isoleucine 172, leucine 370–valine 390, phenylalanine 407–proline 427, glutamine 431–valine 451, methionine 459–phenylalanine 479, and phenylalanine 482–leucine 502.

The protein belongs to the aromatic acid exporter ArAE (TC 2.A.85) family.

Its subcellular location is the cell inner membrane. Its function is as follows. Forms an efflux pump with AaeA. Could function as a metabolic relief valve, allowing to eliminate certain compounds when they accumulate to high levels in the cell. In Escherichia coli (strain K12 / MC4100 / BW2952), this protein is p-hydroxybenzoic acid efflux pump subunit AaeB.